We begin with the raw amino-acid sequence, 248 residues long: Tropomyosin alpha-4 chain (248 aa).

Alanine 2 carries the post-translational modification N-acetylalanine. Residues 2-248 (AGLNSLEAVK…DQTLNELNCI (247 aa)) adopt a coiled-coil conformation. A Phosphoserine modification is found at serine 6. Residues 15-47 (QALQQQADEAEDRAQGLQRELDGERERREKAEG) are disordered. Basic and acidic residues predominate over residues 33-47 (RELDGERERREKAEG). An N6-acetyllysine mark is found at lysine 177 and lysine 215. At threonine 216 the chain carries Phosphothreonine.

Belongs to the tropomyosin family. As to quaternary structure, homodimer. Heterodimer of an alpha (TPM1, TPM3 or TPM4) and a beta (TPM2) chain. Detected in cardiac tissue and platelets, the form found in cardiac tissue is a higher molecular weight than the form found in platelets. Expressed at higher levels in the platelets of hypertensive patients with cardiac hypertrophy than in the platelets of hypertensive patients without cardiac hypertrophy (at protein level).

The protein localises to the cytoplasm. It is found in the cytoskeleton. In terms of biological role, binds to actin filaments in muscle and non-muscle cells. Plays a central role, in association with the troponin complex, in the calcium dependent regulation of vertebrate striated muscle contraction. Smooth muscle contraction is regulated by interaction with caldesmon. In non-muscle cells is implicated in stabilizing cytoskeleton actin filaments. Binds calcium. Plays a role in platelet biogenesis. The sequence is that of Tropomyosin alpha-4 chain (TPM4) from Homo sapiens (Human).